Reading from the N-terminus, the 293-residue chain is Ribosomal protein L11 methyltransferase (293 aa).

S-adenosyl-L-methionine-binding residues include Thr-145, Gly-166, Asp-188, and Asn-230.

It belongs to the methyltransferase superfamily. PrmA family.

Its subcellular location is the cytoplasm. It catalyses the reaction L-lysyl-[protein] + 3 S-adenosyl-L-methionine = N(6),N(6),N(6)-trimethyl-L-lysyl-[protein] + 3 S-adenosyl-L-homocysteine + 3 H(+). Its function is as follows. Methylates ribosomal protein L11. This chain is Ribosomal protein L11 methyltransferase, found in Actinobacillus succinogenes (strain ATCC 55618 / DSM 22257 / CCUG 43843 / 130Z).